Consider the following 314-residue polypeptide: UDP-3-O-acyl-N-acetylglucosamine deacetylase (314 aa).

Zn(2+) is bound by residues histidine 82, histidine 239, and aspartate 243. The active-site Proton donor is histidine 266.

It belongs to the LpxC family. The cofactor is Zn(2+).

It carries out the reaction a UDP-3-O-[(3R)-3-hydroxyacyl]-N-acetyl-alpha-D-glucosamine + H2O = a UDP-3-O-[(3R)-3-hydroxyacyl]-alpha-D-glucosamine + acetate. Its pathway is glycolipid biosynthesis; lipid IV(A) biosynthesis; lipid IV(A) from (3R)-3-hydroxytetradecanoyl-[acyl-carrier-protein] and UDP-N-acetyl-alpha-D-glucosamine: step 2/6. Functionally, catalyzes the hydrolysis of UDP-3-O-myristoyl-N-acetylglucosamine to form UDP-3-O-myristoylglucosamine and acetate, the committed step in lipid A biosynthesis. This is UDP-3-O-acyl-N-acetylglucosamine deacetylase from Myxococcus xanthus (strain DK1622).